The chain runs to 342 residues: Foldase protein PrsA (342 aa).

The N-terminal stretch at 1 to 20 (MKKKLILAAAGAMAVFSLAA) is a signal peptide. C21 carries the N-palmitoyl cysteine lipid modification. C21 carries the S-diacylglycerol cysteine lipid modification. The 94-residue stretch at 142–235 (HPEVEAQIIQ…QTYQTTYYVV (94 aa)) folds into the PpiC domain. The interval 297–342 (MQTESSSASSEKKESKSSDSKTSDTKTSDSEKATDSSSKTTESSSK) is disordered. Basic and acidic residues predominate over residues 306–330 (SEKKESKSSDSKTSDTKTSDSEKAT). Residues 331-342 (DSSSKTTESSSK) are compositionally biased toward low complexity.

The protein belongs to the PrsA family.

The protein localises to the cell membrane. It catalyses the reaction [protein]-peptidylproline (omega=180) = [protein]-peptidylproline (omega=0). Plays a major role in protein secretion by helping the post-translocational extracellular folding of several secreted proteins. This Enterococcus faecalis (strain ATCC 700802 / V583) protein is Foldase protein PrsA.